The following is a 341-amino-acid chain: Endoglucanase 1 (341 aa).

An N-terminal signal peptide occupies residues 1 to 16 (MKTATLLAALSVLAGA). Positions 17 to 30 (LAAPLAGDSALHRR) are excised as a propeptide. Catalysis depends on Glu166, which acts as the Proton donor. The active-site Nucleophile is the Glu275.

It belongs to the glycosyl hydrolase 5 (cellulase A) family.

The enzyme catalyses Endohydrolysis of (1-&gt;4)-beta-D-glucosidic linkages in cellulose, lichenin and cereal beta-D-glucans.. Its function is as follows. Has endoglucanase activity on carboxymethyl-cellulose (CMC). The chain is Endoglucanase 1 (CMC1) from Saitozyma flava (Cryptococcus flavus).